Here is a 952-residue protein sequence, read N- to C-terminus: Protocadherin-20 (952 aa).

Residues 1-60 (MRGRGNARSLLVQAVSLRPATWHPCLDMGHLHRPSSRTSHRNLPHVFLLFLFVGPFNCLA) form the signal peptide. Residues 61–891 (SYSRATELLY…VESMSCMPTL (831 aa)) are Extracellular-facing. 6 Cadherin domains span residues 64-210 (RATE…APQF), 211-321 (PISE…CPLF), 322-536 (IDSQ…APVF), 537-640 (LQPL…SPRF), 641-743 (INKD…PPLV), and 747-864 (QSNM…EPEI). Asn135 carries N-linked (GlcNAc...) asparagine glycosylation. Residues Asn327 and Asn333 are each glycosylated (N-linked (GlcNAc...) asparagine). N-linked (GlcNAc...) asparagine glycosylation is found at Asn681, Asn749, Asn804, Asn845, and Asn850. The helical transmembrane segment at 892–912 (VALSVISLGSITLVTGMGIYI) threads the bilayer. Residues 913–952 (CLRKGKKHHREDDNLEVQIPLKGKIDLCMRERKPVDISNI) are Cytoplasmic-facing.

It localises to the cell membrane. Functionally, potential calcium-dependent cell-adhesion protein. The protein is Protocadherin-20 (Pcdh20) of Mus musculus (Mouse).